We begin with the raw amino-acid sequence, 151 residues long: Ribosomal RNA large subunit methyltransferase H (151 aa).

Residues glycine 100 and leucine 119 to phenylalanine 124 each bind S-adenosyl-L-methionine.

The protein belongs to the RNA methyltransferase RlmH family. Homodimer.

The protein localises to the cytoplasm. It catalyses the reaction pseudouridine(1915) in 23S rRNA + S-adenosyl-L-methionine = N(3)-methylpseudouridine(1915) in 23S rRNA + S-adenosyl-L-homocysteine + H(+). Its function is as follows. Specifically methylates the pseudouridine at position 1915 (m3Psi1915) in 23S rRNA. This chain is Ribosomal RNA large subunit methyltransferase H, found in Thermotoga neapolitana (strain ATCC 49049 / DSM 4359 / NBRC 107923 / NS-E).